A 100-amino-acid chain; its full sequence is Urease subunit gamma (100 aa).

This sequence belongs to the urease gamma subunit family. Heterotrimer of UreA (gamma), UreB (beta) and UreC (alpha) subunits. Three heterotrimers associate to form the active enzyme.

The protein localises to the cytoplasm. It catalyses the reaction urea + 2 H2O + H(+) = hydrogencarbonate + 2 NH4(+). It participates in nitrogen metabolism; urea degradation; CO(2) and NH(3) from urea (urease route): step 1/1. This Mycobacterium bovis (strain ATCC BAA-935 / AF2122/97) protein is Urease subunit gamma.